Reading from the N-terminus, the 120-residue chain is UPF0231 protein YacL (120 aa).

Belongs to the UPF0231 family.

The chain is UPF0231 protein YacL from Escherichia coli O139:H28 (strain E24377A / ETEC).